Consider the following 376-residue polypeptide: Protein-glutamate methylesterase/protein-glutamine glutaminase (376 aa).

The region spanning 5 to 122 (KVLIVDDSAL…QHTFEDYTDE (118 aa)) is the Response regulatory domain. A 4-aspartylphosphate modification is found at D56. In terms of domain architecture, CheB-type methylesterase spans 185-376 (SKPSHKVIAL…PEKILALIKK (192 aa)). Active-site residues include S197, H223, and D319.

The protein belongs to the CheB family. In terms of processing, phosphorylated by CheA. Phosphorylation of the N-terminal regulatory domain activates the methylesterase activity.

It is found in the cytoplasm. The enzyme catalyses [protein]-L-glutamate 5-O-methyl ester + H2O = L-glutamyl-[protein] + methanol + H(+). It carries out the reaction L-glutaminyl-[protein] + H2O = L-glutamyl-[protein] + NH4(+). Functionally, involved in chemotaxis. Part of a chemotaxis signal transduction system that modulates chemotaxis in response to various stimuli. Catalyzes the demethylation of specific methylglutamate residues introduced into the chemoreceptors (methyl-accepting chemotaxis proteins or MCP) by CheR. Also mediates the irreversible deamidation of specific glutamine residues to glutamic acid. This chain is Protein-glutamate methylesterase/protein-glutamine glutaminase, found in Hydrogenovibrio crunogenus (strain DSM 25203 / XCL-2) (Thiomicrospira crunogena).